Reading from the N-terminus, the 221-residue chain is Epididymal secretory glutathione peroxidase (221 aa).

An N-terminal signal peptide occupies residues 1 to 21 (MVTELRVFYLVPLLLASYVQT). C73 is an active-site residue.

This sequence belongs to the glutathione peroxidase family. Epididymis.

The protein resides in the secreted. The enzyme catalyses 2 glutathione + H2O2 = glutathione disulfide + 2 H2O. In terms of biological role, protects cells and enzymes from oxidative damage, by catalyzing the reduction of hydrogen peroxide, lipid peroxides and organic hydroperoxide, by glutathione. May constitute a glutathione peroxidase-like protective system against peroxide damage in sperm membrane lipids. This is Epididymal secretory glutathione peroxidase (Gpx5) from Mus musculus (Mouse).